The chain runs to 422 residues: Serine--tRNA ligase (422 aa).

230–232 (TAE) contributes to the L-serine binding site. Position 261-263 (261-263 (RAE)) interacts with ATP. E284 provides a ligand contact to L-serine. Residue 348–351 (EISS) coordinates ATP. S383 serves as a coordination point for L-serine.

The protein belongs to the class-II aminoacyl-tRNA synthetase family. Type-1 seryl-tRNA synthetase subfamily. In terms of assembly, homodimer. The tRNA molecule binds across the dimer.

The protein localises to the cytoplasm. The enzyme catalyses tRNA(Ser) + L-serine + ATP = L-seryl-tRNA(Ser) + AMP + diphosphate + H(+). It catalyses the reaction tRNA(Sec) + L-serine + ATP = L-seryl-tRNA(Sec) + AMP + diphosphate + H(+). Its pathway is aminoacyl-tRNA biosynthesis; selenocysteinyl-tRNA(Sec) biosynthesis; L-seryl-tRNA(Sec) from L-serine and tRNA(Sec): step 1/1. Catalyzes the attachment of serine to tRNA(Ser). Is also able to aminoacylate tRNA(Sec) with serine, to form the misacylated tRNA L-seryl-tRNA(Sec), which will be further converted into selenocysteinyl-tRNA(Sec). The protein is Serine--tRNA ligase of Pelotomaculum thermopropionicum (strain DSM 13744 / JCM 10971 / SI).